A 445-amino-acid polypeptide reads, in one-letter code: GTPase Der (445 aa).

2 EngA-type G domains span residues 3–167 (PVIA…YAGQ) and 180–353 (IKIA…AAAM). Residues 9–16 (GRPNVGKS), 56–60 (DTGGF), 119–122 (NKAE), 186–193 (GRPNVGKS), 233–237 (DTAGL), and 298–301 (NKWD) contribute to the GTP site. The region spanning 354–438 (AKLPTPKLTR…PLRIEFRSSN (85 aa)) is the KH-like domain.

Belongs to the TRAFAC class TrmE-Era-EngA-EngB-Septin-like GTPase superfamily. EngA (Der) GTPase family. Associates with the 50S ribosomal subunit.

In terms of biological role, GTPase that plays an essential role in the late steps of ribosome biogenesis. The sequence is that of GTPase Der from Burkholderia ambifaria (strain MC40-6).